The chain runs to 131 residues: Profilin-3 (131 aa).

An intrachain disulfide couples Cys-13 to Cys-115. Positions 81-97 (AVIRGKKGSGGITIKKT) match the Involved in PIP2 interaction motif. Position 111 is a phosphothreonine (Thr-111).

This sequence belongs to the profilin family. Occurs in many kinds of cells as a complex with monomeric actin in a 1:1 ratio. Phosphorylated by MAP kinases.

Its subcellular location is the cytoplasm. It is found in the cytoskeleton. Its function is as follows. Binds to actin and affects the structure of the cytoskeleton. At high concentrations, profilin prevents the polymerization of actin, whereas it enhances it at low concentrations. In Olea europaea (Common olive), this protein is Profilin-3.